A 124-amino-acid polypeptide reads, in one-letter code: Small ribosomal subunit protein eS6 (124 aa).

This sequence belongs to the eukaryotic ribosomal protein eS6 family.

This chain is Small ribosomal subunit protein eS6, found in Methanococcus maripaludis (strain C7 / ATCC BAA-1331).